The sequence spans 196 residues: Imidazoleglycerol-phosphate dehydratase (196 aa).

This sequence belongs to the imidazoleglycerol-phosphate dehydratase family.

Its subcellular location is the cytoplasm. It catalyses the reaction D-erythro-1-(imidazol-4-yl)glycerol 3-phosphate = 3-(imidazol-4-yl)-2-oxopropyl phosphate + H2O. It participates in amino-acid biosynthesis; L-histidine biosynthesis; L-histidine from 5-phospho-alpha-D-ribose 1-diphosphate: step 6/9. The polypeptide is Imidazoleglycerol-phosphate dehydratase (Lachnoclostridium phytofermentans (strain ATCC 700394 / DSM 18823 / ISDg) (Clostridium phytofermentans)).